The chain runs to 572 residues: Dihydroxy-acid dehydratase (572 aa).

Aspartate 78 lines the Mg(2+) pocket. Cysteine 119 contacts [2Fe-2S] cluster. The Mg(2+) site is built by aspartate 120 and lysine 121. An N6-carboxylysine modification is found at lysine 121. Cysteine 192 is a binding site for [2Fe-2S] cluster. Glutamate 459 provides a ligand contact to Mg(2+). The Proton acceptor role is filled by serine 485.

The protein belongs to the IlvD/Edd family. Homodimer. The cofactor is [2Fe-2S] cluster. Mg(2+) is required as a cofactor.

The catalysed reaction is (2R)-2,3-dihydroxy-3-methylbutanoate = 3-methyl-2-oxobutanoate + H2O. It carries out the reaction (2R,3R)-2,3-dihydroxy-3-methylpentanoate = (S)-3-methyl-2-oxopentanoate + H2O. The protein operates within amino-acid biosynthesis; L-isoleucine biosynthesis; L-isoleucine from 2-oxobutanoate: step 3/4. It participates in amino-acid biosynthesis; L-valine biosynthesis; L-valine from pyruvate: step 3/4. In terms of biological role, functions in the biosynthesis of branched-chain amino acids. Catalyzes the dehydration of (2R,3R)-2,3-dihydroxy-3-methylpentanoate (2,3-dihydroxy-3-methylvalerate) into 2-oxo-3-methylpentanoate (2-oxo-3-methylvalerate) and of (2R)-2,3-dihydroxy-3-methylbutanoate (2,3-dihydroxyisovalerate) into 2-oxo-3-methylbutanoate (2-oxoisovalerate), the penultimate precursor to L-isoleucine and L-valine, respectively. This chain is Dihydroxy-acid dehydratase, found in Helicobacter hepaticus (strain ATCC 51449 / 3B1).